We begin with the raw amino-acid sequence, 502 residues long: ATP synthase subunit alpha (502 aa).

The interval 119-139 (GPIATTKSRPIESPAPGVMDR) is disordered. Residue 169 to 176 (GDRQTGKT) coordinates ATP.

The protein belongs to the ATPase alpha/beta chains family. F-type ATPases have 2 components, CF(1) - the catalytic core - and CF(0) - the membrane proton channel. CF(1) has five subunits: alpha(3), beta(3), gamma(1), delta(1), epsilon(1). CF(0) has three main subunits: a(1), b(2) and c(9-12). The alpha and beta chains form an alternating ring which encloses part of the gamma chain. CF(1) is attached to CF(0) by a central stalk formed by the gamma and epsilon chains, while a peripheral stalk is formed by the delta and b chains.

It localises to the cell membrane. It catalyses the reaction ATP + H2O + 4 H(+)(in) = ADP + phosphate + 5 H(+)(out). Its function is as follows. Produces ATP from ADP in the presence of a proton gradient across the membrane. The alpha chain is a regulatory subunit. The polypeptide is ATP synthase subunit alpha (Alkalihalophilus pseudofirmus (strain ATCC BAA-2126 / JCM 17055 / OF4) (Bacillus pseudofirmus)).